Consider the following 319-residue polypeptide: tRNA dimethylallyltransferase (319 aa).

11-18 (GPTCSGKS) provides a ligand contact to ATP. 13-18 (TCSGKS) is a substrate binding site. Interaction with substrate tRNA stretches follow at residues 36 to 39 (DSMQ) and 160 to 164 (QRIAR).

This sequence belongs to the IPP transferase family. In terms of assembly, monomer. The cofactor is Mg(2+).

The catalysed reaction is adenosine(37) in tRNA + dimethylallyl diphosphate = N(6)-dimethylallyladenosine(37) in tRNA + diphosphate. Its function is as follows. Catalyzes the transfer of a dimethylallyl group onto the adenine at position 37 in tRNAs that read codons beginning with uridine, leading to the formation of N6-(dimethylallyl)adenosine (i(6)A). This is tRNA dimethylallyltransferase from Granulibacter bethesdensis (strain ATCC BAA-1260 / CGDNIH1).